We begin with the raw amino-acid sequence, 339 residues long: Malate/(S)-sulfolactate dehydrogenase (339 aa).

The protein belongs to the LDH2/MDH2 oxidoreductase family. In terms of assembly, homodimer.

Its subcellular location is the cytoplasm. The catalysed reaction is (S)-malate + NAD(+) = oxaloacetate + NADH + H(+). The enzyme catalyses (S)-malate + NADP(+) = oxaloacetate + NADPH + H(+). It carries out the reaction (2S)-3-sulfolactate + NAD(+) = 3-sulfopyruvate + NADH + H(+). Functionally, acts on oxaloacetate, sulfopyruvate but not on pyruvate. Has a higher selectivity for the coenzyme NADH than for NADPH. In Methanothermus fervidus (strain ATCC 43054 / DSM 2088 / JCM 10308 / V24 S), this protein is Malate/(S)-sulfolactate dehydrogenase (mdh).